Reading from the N-terminus, the 461-residue chain is Alpha-tubulin N-acetyltransferase 1 (461 aa).

Residues 2 to 189 (VEFRFDIKPL…NNFVLYEGFF (188 aa)) form the N-acetyltransferase domain. Acetyl-CoA is bound by residues 123–136 (FYVH…GLGK) and 159–168 (SEKLLSFLSK). 3 disordered regions span residues 196-295 (NGGG…GNHD), 314-362 (NSYE…PEVA), and 418-443 (RPPG…SGGG). Positions 233 to 254 (RRGSQQQTTPNARLQQITQISP) are enriched in polar residues. The span at 283 to 293 (GSAEANSGNGN) shows a compositional bias: low complexity. Over residues 318 to 336 (PEPEVEPEPEPEPEPEPEP) the composition is skewed to acidic residues. The segment covering 339 to 356 (ITPPSPPPKSHTPTPPSV) has biased composition (pro residues). Polar residues predominate over residues 426-439 (SPGQDNTDAMSTVS).

This sequence belongs to the acetyltransferase ATAT1 family.

The catalysed reaction is L-lysyl-[alpha-tubulin] + acetyl-CoA = N(6)-acetyl-L-lysyl-[alpha-tubulin] + CoA + H(+). Functionally, specifically acetylates 'Lys-40' in alpha-tubulin on the lumenal side of microtubules. Promotes microtubule destabilization and accelerates microtubule dynamics; this activity may be independent of acetylation activity. Acetylates alpha-tubulin with a slow enzymatic rate, due to a catalytic site that is not optimized for acetyl transfer. Enters the microtubule through each end and diffuses quickly throughout the lumen of microtubules. Acetylates only long/old microtubules because of its slow acetylation rate since it does not have time to act on dynamically unstable microtubules before the enzyme is released. Acetylates central spindle microtubules. The chain is Alpha-tubulin N-acetyltransferase 1 from Drosophila melanogaster (Fruit fly).